Consider the following 261-residue polypeptide: Uridylate kinase (261 aa).

The tract at residues 1–23 (MTEPDVAGAPASKPEPASTGAAS) is disordered. An ATP-binding site is contributed by 36–39 (KLGG). Gly77 lines the UMP pocket. ATP-binding residues include Gly78 and Arg82. UMP is bound by residues Asp97 and 158-165 (MGLPYFST). ATP contacts are provided by Phe191 and Asp194.

It belongs to the UMP kinase family. In terms of assembly, homohexamer.

The protein resides in the cytoplasm. It catalyses the reaction UMP + ATP = UDP + ADP. The protein operates within pyrimidine metabolism; CTP biosynthesis via de novo pathway; UDP from UMP (UMPK route): step 1/1. Inhibited by UTP. Catalyzes the reversible phosphorylation of UMP to UDP. The sequence is that of Uridylate kinase from Mycobacterium tuberculosis (strain ATCC 25177 / H37Ra).